A 238-amino-acid polypeptide reads, in one-letter code: Ubiquinone biosynthesis O-methyltransferase (238 aa).

R39, G58, D79, and M123 together coordinate S-adenosyl-L-methionine.

It belongs to the methyltransferase superfamily. UbiG/COQ3 family.

It catalyses the reaction a 3-demethylubiquinol + S-adenosyl-L-methionine = a ubiquinol + S-adenosyl-L-homocysteine + H(+). It carries out the reaction a 3-(all-trans-polyprenyl)benzene-1,2-diol + S-adenosyl-L-methionine = a 2-methoxy-6-(all-trans-polyprenyl)phenol + S-adenosyl-L-homocysteine + H(+). It functions in the pathway cofactor biosynthesis; ubiquinone biosynthesis. O-methyltransferase that catalyzes the 2 O-methylation steps in the ubiquinone biosynthetic pathway. The chain is Ubiquinone biosynthesis O-methyltransferase from Hahella chejuensis (strain KCTC 2396).